The sequence spans 427 residues: Amino acid transporter AVT3A (427 aa).

The segment at 1–35 (MRYDQEAGSSSHSLPSGSSSHSLPPTEDTPLLGPR) is disordered. Topologically, residues 1–42 (MRYDQEAGSSSHSLPSGSSSHSLPPTEDTPLLGPRTLSSQPK) are cytoplasmic. Over residues 8-24 (GSSSHSLPSGSSSHSLP) the composition is skewed to low complexity. Residues 43 to 63 (TFANVFIAIVGAGVLGLPYTF) traverse the membrane as a helical segment. Topologically, residues 64–69 (KKTGWL) are vacuolar. A helical membrane pass occupies residues 70–90 (LGLLTLLFVSSLTFFCMMLLV). Over 91-122 (HTRRKLESLSGFNSITSFGDLGESVCGPAGRL) the chain is Cytoplasmic. A helical membrane pass occupies residues 123 to 143 (VVDVMLVLSQSGFCVSYLIFV). Residues 144-157 (ATTMANLLSRGTEH) lie on the Vacuolar side of the membrane. The helical transmembrane segment at 158-178 (ILGLDAASIYLWGCFPFQLGL) threads the bilayer. The Cytoplasmic portion of the chain corresponds to 179-186 (NSIPSLTH). A helical transmembrane segment spans residues 187-207 (LAPLSIFADIVDVAATLVVMV). At 208 to 227 (QDVFIFLKRRPPLRVFGGVS) the chain is on the vacuolar side. Residues 228-248 (VFFYGLGVAVYAFEGIGMVLP) traverse the membrane as a helical segment. Residues 249 to 262 (LELEAKYKDKFGRA) lie on the Cytoplasmic side of the membrane. Residues 263–283 (LGLAMGLISIMYGAFGLLGYM) traverse the membrane as a helical segment. At 284–300 (AYGEETKDIITTNLGTG) the chain is on the vacuolar side. A helical transmembrane segment spans residues 301–321 (VVSTLVQLGLAINLFFTFPLM). Over 322-339 (MQPVYEVVERRLCSSRYS) the chain is Cytoplasmic. Residues 340–360 (VWVRWATVLVVTLVALLVPNF) traverse the membrane as a helical segment. The Vacuolar portion of the chain corresponds to 361 to 362 (AD). Residues 363–383 (FLSLVGSSVCVVLGFVLPSLF) traverse the membrane as a helical segment. Over 384–396 (HLQAFKNELSITR) the chain is Cytoplasmic. A helical membrane pass occupies residues 397–417 (IVVDVLVFLIGVMIAITGTWT). At 418 to 427 (AVHEILTSKA) the chain is on the vacuolar side.

The protein belongs to the amino acid/polyamine transporter 2 family. Amino acid/auxin permease (AAAP) (TC 2.A.18.8) subfamily. In terms of tissue distribution, ubiquitous.

It localises to the vacuole membrane. Translocates preferentially neutral amino acids and to a lesser extent aromatic amino acids from the vacuole to the cytoplasm. Requires ATP for function. In Arabidopsis thaliana (Mouse-ear cress), this protein is Amino acid transporter AVT3A.